Consider the following 412-residue polypeptide: MIVDSISSSTASTSSSSPTRGTPIRKSLQCAVCGDVALGKHYGVNACNGCKGFFRRSIWKNRTYACRHGGKCLVAKEQRNACRSCRLTRCLDVGMNPRAVQGDTVEDPEWDEEAMPETLSISTQTDALKVKKKSHTSLFTLDIKKEQIIDNLRAIYARTDPEEFWKLTYPGTYDFRYAFHNTKVVSPRTPLTPTAERIATLNDVVADFRRAFVLFVDILKSIDQLRDVQEDDKMKIAKSRFAAFYWWLCSTWSAKAGCNGVCYSNGSYHPASISDMPKSEGKHGVRIDYSGVSQKSLENLVEPLRRMELSDEERIVGAVMVILADPVPNVSTKTEKILAEARDFYLELLGYCIKLPEEQQGIRVSTMVLLLASIMELVHLTTDNIQLSDVLHVIDLGDWSQELRDHRYRRQF.

Residues 1–19 (MIVDSISSSTASTSSSSPT) show a composition bias toward low complexity. Residues 1–23 (MIVDSISSSTASTSSSSPTRGTP) form a disordered region. Residues 27 to 102 (SLQCAVCGDV…VGMNPRAVQG (76 aa)) constitute a DNA-binding region (nuclear receptor). NR C4-type zinc fingers lie at residues 30–50 (CAVC…CNGC) and 66–90 (CRHG…LTRC). The 264-residue stretch at 144–407 (KKEQIIDNLR…DWSQELRDHR (264 aa)) folds into the NR LBD domain.

This sequence belongs to the nuclear hormone receptor family.

Its subcellular location is the nucleus. Orphan nuclear receptor. This chain is Nuclear hormone receptor family member nhr-61 (nhr-61), found in Caenorhabditis elegans.